The sequence spans 366 residues: Beta sliding clamp (366 aa).

Residues 1–125 (MKFTVEREHL…FPNLDDWQSE (125 aa)) are i. The segment at 126–253 (VEFTLPQATM…YRRVLPKNPD (128 aa)) is II. The III stretch occupies residues 254–366 (KHLEAGCDLL…AAYVVMPMRL (113 aa)).

This sequence belongs to the beta sliding clamp family. As to quaternary structure, forms a ring-shaped head-to-tail homodimer around DNA which binds and tethers DNA polymerases and other proteins to the DNA. The DNA replisome complex has a single clamp-loading complex (3 tau and 1 each of delta, delta', psi and chi subunits) which binds 3 Pol III cores (1 core on the leading strand and 2 on the lagging strand) each with a beta sliding clamp dimer. Additional proteins in the replisome are other copies of gamma, psi and chi, Ssb, DNA helicase and RNA primase.

The protein localises to the cytoplasm. Its function is as follows. Confers DNA tethering and processivity to DNA polymerases and other proteins. Acts as a clamp, forming a ring around DNA (a reaction catalyzed by the clamp-loading complex) which diffuses in an ATP-independent manner freely and bidirectionally along dsDNA. Initially characterized for its ability to contact the catalytic subunit of DNA polymerase III (Pol III), a complex, multichain enzyme responsible for most of the replicative synthesis in bacteria; Pol III exhibits 3'-5' exonuclease proofreading activity. The beta chain is required for initiation of replication as well as for processivity of DNA replication. In Escherichia coli O157:H7, this protein is Beta sliding clamp (dnaN).